The sequence spans 191 residues: Transcriptional activator GvpE1 (191 aa).

Positions 31 to 51 are disordered; that stretch reads SDGASDHADQPPDEGATQRYT. 140-145 contributes to the DNA binding site; that stretch reads KRKVYR. Residues 150–181 form a leucine-zipper region; that stretch reads EGAFTRIDHMVDQLLLFSLVLKAVMTDCKARQ.

As to quaternary structure, interacts with GvpD.

The protein resides in the cytoplasm. Its activity is regulated as follows. The amount of protein that accumulates is controlled by GvpD; GvpD causes a reduction in the amount of GvpE, preventing accumulation of excessive amounts of gas vesicles. Functionally, plays a regulatory role in gas vesicle synthesis, activates transcription of the gvpA operon, and probably of the gvpD operon. Gas vesicles are hollow, gas filled proteinaceous nanostructures found in several microbial planktonic microorganisms. They allow positioning of halobacteria at the optimal depth for growth in the poorly aerated, shallow brine pools of their habitat. Its function is as follows. Expression of a 9.5 kb p-vac DNA fragment containing 2 divergently transcribed regions (gvpD-gvpE-gvpF-gvpG-gvpH-gvpI-gvpJ-gvpK-gvpL-gvpM and gvpA-gvpC-gvpN-gvpO) allows H.volcanii to produce gas vesicles. A similar region restores gas vesicle production in H.halobium without the p-vac locus, but it still has the c-vac locus. The polypeptide is Transcriptional activator GvpE1 (gvpE11) (Halobacterium salinarum (strain ATCC 700922 / JCM 11081 / NRC-1) (Halobacterium halobium)).